Consider the following 900-residue polypeptide: Trehalose-phosphatase (900 aa).

Disordered stretches follow at residues 76 to 109 and 874 to 900; these read SRLF…EEDP and VKHS…SYKN. Residues 82–108 show a composition bias toward basic and acidic residues; the sequence is KNRDKSENGEKGENDLHAKEEREKEED.

It in the C-terminal section; belongs to the trehalose phosphatase family. This sequence in the N-terminal section; belongs to the glycosyltransferase 20 family. It depends on Mg(2+) as a cofactor.

It catalyses the reaction alpha,alpha-trehalose 6-phosphate + H2O = alpha,alpha-trehalose + phosphate. It functions in the pathway carbohydrate biosynthesis. Phosphatase catalytic subunit of the trehalose synthase complex that catalyzes the production of trehalose from glucose-6-phosphate and UDP-alpha-D-glucose in a two step process. The polypeptide is Trehalose-phosphatase (Zygosaccharomyces rouxii).